Here is a 220-residue protein sequence, read N- to C-terminus: MNSLISNEVYDVESGLRKVIESAKANFCESVDVAINLNINSSKSDEQVRGCVVLPKGLGREIKVAVFAKGGYLEMAREAMADIVGDEELIEEVKKKQCKLDVDWCLTTPDFMASVSSIAKILGPKGLMPNPKFNTVTFELAKAIKMIKSGQIKFKSDKTGIVHAKIGNIKFSIEDLLENFNAVISAVKQCKPASIKGLYFKDVFIISTMGKSVKVENLNN.

The protein belongs to the universal ribosomal protein uL1 family. As to quaternary structure, part of the 50S ribosomal subunit.

In terms of biological role, binds directly to 23S rRNA. The L1 stalk is quite mobile in the ribosome, and is involved in E site tRNA release. Functionally, protein L1 is also a translational repressor protein, it controls the translation of the L11 operon by binding to its mRNA. The chain is Large ribosomal subunit protein uL1 from Ehrlichia chaffeensis (strain ATCC CRL-10679 / Arkansas).